Here is a 610-residue protein sequence, read N- to C-terminus: ESX-5 secretion system protein EccA5 (610 aa).

Position 357–364 (357–364 (GPPGTGKT)) interacts with ATP.

This sequence belongs to the CbxX/CfxQ family. Part of the ESX-5 / type VII secretion system (T7SS), which is composed of cytosolic and membrane components.

Its subcellular location is the cytoplasm. Part of an ESX-5 / type VII specialized secretion system (T7SS), which exports several proteins. EccA5 exhibits ATPase activity and may provide energy for the export of ESX-5 substrates. The polypeptide is ESX-5 secretion system protein EccA5 (Mycobacterium bovis (strain ATCC BAA-935 / AF2122/97)).